The primary structure comprises 260 residues: Cytochrome c oxidase subunit 3 (260 aa).

A run of 6 helical transmembrane segments spans residues 30–50 (LILW…VLLV), 81–101 (GMIL…WAFF), 126–146 (FLVP…VTWA), 158–178 (AIQS…LQAW), 196–216 (FFVA…FLAV), and 239–259 (WYWH…YWWG).

This sequence belongs to the cytochrome c oxidase subunit 3 family. Component of the cytochrome c oxidase (complex IV, CIV), a multisubunit enzyme composed of a catalytic core of 3 subunits and several supernumerary subunits. The complex exists as a monomer or a dimer and forms supercomplexes (SCs) in the inner mitochondrial membrane with ubiquinol-cytochrome c oxidoreductase (cytochrome b-c1 complex, complex III, CIII).

Its subcellular location is the mitochondrion inner membrane. The enzyme catalyses 4 Fe(II)-[cytochrome c] + O2 + 8 H(+)(in) = 4 Fe(III)-[cytochrome c] + 2 H2O + 4 H(+)(out). Its function is as follows. Component of the cytochrome c oxidase, the last enzyme in the mitochondrial electron transport chain which drives oxidative phosphorylation. The respiratory chain contains 3 multisubunit complexes succinate dehydrogenase (complex II, CII), ubiquinol-cytochrome c oxidoreductase (cytochrome b-c1 complex, complex III, CIII) and cytochrome c oxidase (complex IV, CIV), that cooperate to transfer electrons derived from NADH and succinate to molecular oxygen, creating an electrochemical gradient over the inner membrane that drives transmembrane transport and the ATP synthase. Cytochrome c oxidase is the component of the respiratory chain that catalyzes the reduction of oxygen to water. Electrons originating from reduced cytochrome c in the intermembrane space (IMS) are transferred via the dinuclear copper A center (CU(A)) of subunit 2 and heme A of subunit 1 to the active site in subunit 1, a binuclear center (BNC) formed by heme A3 and copper B (CU(B)). The BNC reduces molecular oxygen to 2 water molecules using 4 electrons from cytochrome c in the IMS and 4 protons from the mitochondrial matrix. The sequence is that of Cytochrome c oxidase subunit 3 (COIII) from Pisaster ochraceus (Ochre sea star).